The following is a 314-amino-acid chain: NF-kappa-B inhibitor alpha (314 aa).

A disordered region spans residues 1-41 (MFQPAEPGQEWAMEGPRDALKKERLLDDRHDSGLDSMKDEE). The segment covering 15–41 (GPRDALKKERLLDDRHDSGLDSMKDEE) has biased composition (basic and acidic residues). A Glycyl lysine isopeptide (Lys-Gly) (interchain with G-Cter in SUMO); alternate cross-link involves residue Lys21. Residue Lys21 forms a Glycyl lysine isopeptide (Lys-Gly) (interchain with G-Cter in ubiquitin); alternate linkage. A Glycyl lysine isopeptide (Lys-Gly) (interchain with G-Cter in ubiquitin) cross-link involves residue Lys22. A Destruction motif motif is present at residues 30 to 36 (HDSGLDS). A Phosphoserine; by IKKA and IKKB modification is found at Ser32. At Ser36 the chain carries Phosphoserine; by IKKA, IKKB, IKKE and TBK1. Position 42 is a phosphotyrosine; by Tyr-kinases (Tyr42). The Nuclear export signal signature appears at 45-54 (MVKELREIRL). The Nuclear import signal signature appears at 110 to 120 (LQQTPLHLAVI). ANK repeat units lie at residues 110 to 139 (LQQT…DPEL), 143 to 172 (RGNT…TQHL), 182 to 211 (NGHT…DVNA), and 216 to 245 (NGRT…DVNR). (3S)-3-hydroxyasparagine; by HIF1AN is present on residues Asn210 and Asn244. Phosphoserine; by CK2 is present on residues Ser283 and Ser288. Thr291 carries the phosphothreonine; by CK2 modification. Ser293 is subject to Phosphoserine; by CK2. Thr296 is subject to Phosphothreonine.

It belongs to the NF-kappa-B inhibitor family. As to quaternary structure, interacts with RELA; the interaction requires the nuclear import signal. Part of a 70-90 kDa complex at least consisting of CHUK, IKBKB, NFKBIA, RELA, ELP1 and MAP3K14. Interacts with NKIRAS1 and NKIRAS2. Interacts with RWDD3; the interaction enhances sumoylation. Interacts with PRMT2. Interacts with PRKACA in platelets; this interaction is disrupted by thrombin and collagen. Interacts with MEFV. Interacts with DDRGK1; positively regulates NFKBIA phosphorylation and degradation. Interacts with HNRNPA2B1; the interaction may be mediated by the RRM2 domain of HNRNPA2B1, and HNRNPA2B1 may interact simultaneously with FAM76B and either NFKBIA or NFKBIE to form a complex. Post-translationally, phosphorylated at Ser-32 and Ser-36 by IKKA/CHUK and IKKB/IKBKB; disables inhibition of NF-kappa-B DNA-binding activity. Phosphorylation at positions 32 and 36 is prerequisite to recognition by the SCF(FBXW11) and SCF(BTRC) complexes, leading to polyubiquitination and subsequent degradation. In terms of processing, polyubiquitinated at Lys-21 and/or Lys-22 following phosphorylation at Ser-32 and Ser-36. Monoubiquitinated at Lys-21 and/or Lys-22 by UBE2D3. Ubiquitin chain elongation is then performed by CDC34 in cooperation with the SCF(FBXW11) E3 ligase complex, building ubiquitin chains from the UBE2D3-primed NFKBIA-linked ubiquitin. The resulting polyubiquitination leads to protein degradation. Also ubiquitinated by the SCF(BTRC) complex following stimulus-dependent phosphorylation at Ser-32 and Ser-36. Deubiquitinated by USP38, leading to NF-kappa-B inhibition. Sumoylated; sumoylation requires the presence of the nuclear import signal. Sumoylation blocks ubiquitination and proteasome-mediated degradation of the protein thereby increasing the protein stability. Post-translationally, hydroxylated by HIF1AN.

It localises to the cytoplasm. Its subcellular location is the nucleus. Functionally, inhibits the activity of dimeric NF-kappa-B/REL complexes by trapping REL (RELA/p65 and NFKB1/p50) dimers in the cytoplasm by masking their nuclear localization signals. On cellular stimulation by immune and pro-inflammatory responses, becomes phosphorylated promoting ubiquitination and degradation, enabling the dimeric RELA to translocate to the nucleus and activate transcription. This Sus scrofa (Pig) protein is NF-kappa-B inhibitor alpha (NFKBIA).